Here is a 104-residue protein sequence, read N- to C-terminus: Cytochrome c-551 (104 aa).

Residues 1-22 form the signal peptide; it reads MKKILIPMLALGGALAMQPALA. Heme c contacts are provided by C34, C37, H38, and M83.

Post-translationally, binds 1 heme c group covalently per subunit.

Its subcellular location is the periplasm. Its function is as follows. Electron donor for cytochrome cd1 in nitrite and nitrate respiration. This chain is Cytochrome c-551 (nirM), found in Stutzerimonas stutzeri (Pseudomonas stutzeri).